We begin with the raw amino-acid sequence, 215 residues long: MERSKGAILVLSGPSGSGKSSLCKTLFKEIKNAYFSVSTTTRTPREGEIEGKHYHFVSKEKFLEGIEENFFLEWAEVHGNYYGTSKESVESALAQGKLVVFDIDIQGHRNIKESYPELTTSVFITTPTQQELRERLVLRGTDDKETIDLRVMHAYTEMKHIKEFDFVIVNRDLKESEKLLLSIARAALSKRILYDVESLVARWKSKETPKTPNSQ.

The Guanylate kinase-like domain occupies 6–185 (GAILVLSGPS…SEKLLLSIAR (180 aa)). Residue 13 to 20 (GPSGSGKS) coordinates ATP.

This sequence belongs to the guanylate kinase family.

The protein localises to the cytoplasm. The catalysed reaction is GMP + ATP = GDP + ADP. Functionally, essential for recycling GMP and indirectly, cGMP. The polypeptide is Guanylate kinase (Wolinella succinogenes (strain ATCC 29543 / DSM 1740 / CCUG 13145 / JCM 31913 / LMG 7466 / NCTC 11488 / FDC 602W) (Vibrio succinogenes)).